Here is a 754-residue protein sequence, read N- to C-terminus: Ubiquitin carboxyl-terminal hydrolase 9 (754 aa).

Basic residues predominate over residues 1–14 (MIKRWLSVNRKKSH). Residues 1–76 (MIKRWLSVNR…SKFSSQTDNL (76 aa)) form a disordered region. Residues 42–58 (SIAKSPSAKSSTSSIPS) show a composition bias toward low complexity. In terms of domain architecture, USP spans 134-667 (FGYENFGNTC…TAYVLFYKET (534 aa)). The Nucleophile role is filled by Cys-143. Over residues 194 to 209 (ETSTNSGNSNTGYQSN) the composition is skewed to polar residues. The interval 194–273 (ETSTNSGNSN…DNNEMERPQP (80 aa)) is disordered. Residues 222-233 (QSDQDNSSSSTQ) show a composition bias toward low complexity. The segment covering 250–272 (GKDKSNYKDSAKKDDNNEMERPQ) has biased composition (basic and acidic residues). His-618 (proton acceptor) is an active-site residue. The interval 726 to 754 (VKTAETKTPLNDKKRNKQKRKSRILSFIK) is disordered. Residues 727 to 738 (KTAETKTPLNDK) are compositionally biased toward basic and acidic residues. A compositionally biased stretch (basic residues) spans 739-748 (KRNKQKRKSR).

Belongs to the peptidase C19 family.

It catalyses the reaction Thiol-dependent hydrolysis of ester, thioester, amide, peptide and isopeptide bonds formed by the C-terminal Gly of ubiquitin (a 76-residue protein attached to proteins as an intracellular targeting signal).. In Saccharomyces cerevisiae (strain ATCC 204508 / S288c) (Baker's yeast), this protein is Ubiquitin carboxyl-terminal hydrolase 9 (UBP9).